The primary structure comprises 284 residues: MAITYLLPLFLSLIITSSVSANFQRDVEITWGDGRGQIKNNGELLTLSLDKSSGSGFQSKNEYLFGKVSMQMKLVPGNSAGTVTTLYLKSPGTTWDEIDFEFLGNSSGEPYTLHTNVYTQGKGDKEQQFKLWFDPTANFHTYTILWNPQRIIFTVDGTPIREFKNMESLGTLFPKNKPMRMYSSLWNADDWATRGGLVKTDWSKAPFTASYRGFQQEACVWSNGKSSCPNASKQGTTTGSWLSQELDSTAQQRMRWVQRNYMIYNYCTDAKRFPQGLPKECLAA.

Positions 1-21 are cleaved as a signal peptide; it reads MAITYLLPLFLSLIITSSVSA. Residues 22-211 form the GH16 domain; sequence NFQRDVEITW…WSKAPFTASY (190 aa). The active-site Nucleophile is the glutamate 97. The active-site Proton donor is glutamate 101. Xyloglucan is bound at residue glutamate 101. A glycan (N-linked (GlcNAc...) asparagine) is linked at asparagine 105. Residues 114 to 116, 124 to 126, 190 to 191, and glycine 195 contribute to the xyloglucan site; these read HTN, DKE, and DW. Residues cysteine 219 and cysteine 228 are joined by a disulfide bond. Residue asparagine 230 is glycosylated (N-linked (GlcNAc...) asparagine). Cysteine 267 and cysteine 281 are disulfide-bonded. A xyloglucan-binding site is contributed by arginine 272.

The protein belongs to the glycosyl hydrolase 16 family. XTH group 2 subfamily. Contains at least one intrachain disulfide bond essential for its enzymatic activity. Post-translationally, N-glycosylated; essential for its enzymatic activity. In terms of tissue distribution, highly expressed. Predominantly expressed in green siliques. Expressed in young expanding leaves, trichomes, lateral root primordia, vascular tissue, abscission zones and elongating hypocols. Following wind stimulation, it decreases in the leaves of wind-stimulated plants, while it strongly increases in sites around cells of the pith parenchyma, between the vascular elements, and within the epidermis.

Its subcellular location is the secreted. It is found in the cell wall. The protein localises to the extracellular space. The protein resides in the apoplast. The enzyme catalyses breaks a beta-(1-&gt;4) bond in the backbone of a xyloglucan and transfers the xyloglucanyl segment on to O-4 of the non-reducing terminal glucose residue of an acceptor, which can be a xyloglucan or an oligosaccharide of xyloglucan.. Catalyzes xyloglucan endohydrolysis (XEH) and/or endotransglycosylation (XET). Cleaves and religates xyloglucan polymers, an essential constituent of the primary cell wall, and thereby participates in cell wall construction of growing tissues. Its induction in case of mechanical stress, suggests that it may contribute in the adaptive changes in morphogenesis by being recruited to alter tissues tensil strength, or flexibility, enabling adaptation to mechanically stressful environments. The chain is Xyloglucan endotransglucosylase/hydrolase protein 22 (XTH22) from Arabidopsis thaliana (Mouse-ear cress).